The following is a 283-amino-acid chain: Secretory carrier-associated membrane protein 2 (283 aa).

Residues 1–47 are disordered; it reads MARHDPNPFADEEINPFANHTSVPPASNSYLKPLPPEPYDRGATVDI. At 1 to 123 the chain is on the cytoplasmic side; sequence MARHDPNPFA…LQKIQYVAFT (123 aa). Residues 18 to 30 are compositionally biased toward polar residues; that stretch reads ANHTSVPPASNSY. The stretch at 50–87 forms a coiled coil; sequence DSGNDLRAKEMELQAKENELKRKEQELKRREDAIARTG. 4 helical membrane-spanning segments follow: residues 124–144, 151–171, 186–206, and 234–254; these read TLLG…VAWI, IWLL…VLWY, FGAF…AAVA, and IMYF…IWVI. Residues 255–283 are Cytoplasmic-facing; the sequence is QQVYAYFRGSGKAAEMKREATKSTLMRAL.

This sequence belongs to the SCAMP family.

It localises to the cell membrane. Its subcellular location is the cytoplasmic vesicle. The protein localises to the secretory vesicle membrane. Its function is as follows. Probably involved in membrane trafficking. The polypeptide is Secretory carrier-associated membrane protein 2 (SCAMP2) (Arabidopsis thaliana (Mouse-ear cress)).